Reading from the N-terminus, the 867-residue chain is Leucine--tRNA ligase (867 aa).

Positions 57-67 (PYPSGTLHMGH) match the 'HIGH' region motif. The disordered stretch occupies residues 308–327 (SQDERTSDDQPKRGVPTGAV). The span at 309–319 (QDERTSDDQPK) shows a compositional bias: basic and acidic residues. Positions 631-635 (KMSKS) match the 'KMSKS' region motif. Lysine 634 serves as a coordination point for ATP.

It belongs to the class-I aminoacyl-tRNA synthetase family.

It localises to the cytoplasm. It carries out the reaction tRNA(Leu) + L-leucine + ATP = L-leucyl-tRNA(Leu) + AMP + diphosphate. The polypeptide is Leucine--tRNA ligase (Synechococcus sp. (strain CC9311)).